Consider the following 310-residue polypeptide: Methionyl-tRNA formyltransferase (310 aa).

Residue 108–111 coordinates (6S)-5,6,7,8-tetrahydrofolate; that stretch reads SLLP.

The protein belongs to the Fmt family.

The enzyme catalyses L-methionyl-tRNA(fMet) + (6R)-10-formyltetrahydrofolate = N-formyl-L-methionyl-tRNA(fMet) + (6S)-5,6,7,8-tetrahydrofolate + H(+). Its function is as follows. Attaches a formyl group to the free amino group of methionyl-tRNA(fMet). The formyl group appears to play a dual role in the initiator identity of N-formylmethionyl-tRNA by promoting its recognition by IF2 and preventing the misappropriation of this tRNA by the elongation apparatus. In Fusobacterium nucleatum subsp. nucleatum (strain ATCC 25586 / DSM 15643 / BCRC 10681 / CIP 101130 / JCM 8532 / KCTC 2640 / LMG 13131 / VPI 4355), this protein is Methionyl-tRNA formyltransferase.